A 676-amino-acid polypeptide reads, in one-letter code: DNA ligase (676 aa).

NAD(+) is bound by residues 41-45, 90-91, and E123; these read DLTYD and SL. K125 functions as the N6-AMP-lysine intermediate in the catalytic mechanism. 4 residues coordinate NAD(+): R146, E180, K293, and K317. Residues C408, C411, C424, and C429 each coordinate Zn(2+).

Belongs to the NAD-dependent DNA ligase family. LigA subfamily. Requires Mg(2+) as cofactor. It depends on Mn(2+) as a cofactor.

The enzyme catalyses NAD(+) + (deoxyribonucleotide)n-3'-hydroxyl + 5'-phospho-(deoxyribonucleotide)m = (deoxyribonucleotide)n+m + AMP + beta-nicotinamide D-nucleotide.. Functionally, DNA ligase that catalyzes the formation of phosphodiester linkages between 5'-phosphoryl and 3'-hydroxyl groups in double-stranded DNA using NAD as a coenzyme and as the energy source for the reaction. It is essential for DNA replication and repair of damaged DNA. The protein is DNA ligase of Borrelia turicatae (strain 91E135).